The primary structure comprises 439 residues: MDRAPRISFTSLGCPKALVDSERIITRLRAEGYELARKHDGADIVIVNTCGFLDSAKQESLSAIGEAMAENGKVIVTGCMGAEPEQIEQAYPGVLSITGPQQYESVLDAVHRALPPAHNPHLDLVPPQGIKLTPRHYAYLKISEGCNNRCTFCIIPKLRGDLVSRPANDVLREAERLVGAGVKELLVISQDTSAYGVDLKYAESPWKDRQVRAKFLDLARELGELGAWVRLQYVYPYPHVDEVIALMTQGTVLPYLDIPFQHASPEVLKAMKRPAAQDKTLARIKRWREECPDLALRSTFIVGFPGETDADFAYLLDWLDEAEIDRLGCFKYEPVAGATSNAIANPVPEEVKQERYNALMARQQKISARRLKRKVGTRQQIIIDEVGPTVARGRSKADAPEIDGAVYLSSRRPLRVGEIVTAKIERADQYDLHGSVAGF.

In terms of domain architecture, MTTase N-terminal spans 5 to 115; it reads PRISFTSLGC…VLDAVHRALP (111 aa). Positions 14, 50, 79, 146, 150, and 153 each coordinate [4Fe-4S] cluster. The Radical SAM core domain maps to 132–369; sequence LTPRHYAYLK…MARQQKISAR (238 aa). Residues 372–438 enclose the TRAM domain; it reads KRKVGTRQQI…QYDLHGSVAG (67 aa).

It belongs to the methylthiotransferase family. RimO subfamily. It depends on [4Fe-4S] cluster as a cofactor.

Its subcellular location is the cytoplasm. The enzyme catalyses L-aspartate(89)-[ribosomal protein uS12]-hydrogen + (sulfur carrier)-SH + AH2 + 2 S-adenosyl-L-methionine = 3-methylsulfanyl-L-aspartate(89)-[ribosomal protein uS12]-hydrogen + (sulfur carrier)-H + 5'-deoxyadenosine + L-methionine + A + S-adenosyl-L-homocysteine + 2 H(+). Functionally, catalyzes the methylthiolation of an aspartic acid residue of ribosomal protein uS12. The polypeptide is Ribosomal protein uS12 methylthiotransferase RimO (Bradyrhizobium diazoefficiens (strain JCM 10833 / BCRC 13528 / IAM 13628 / NBRC 14792 / USDA 110)).